The primary structure comprises 613 residues: Dihydroxy-acid dehydratase (613 aa).

Asp81 contributes to the Mg(2+) binding site. Cys122 contributes to the [2Fe-2S] cluster binding site. Mg(2+)-binding residues include Asp123 and Lys124. Lys124 carries the post-translational modification N6-carboxylysine. Residue Cys195 participates in [2Fe-2S] cluster binding. Glu491 lines the Mg(2+) pocket. The active-site Proton acceptor is the Ser517.

Belongs to the IlvD/Edd family. In terms of assembly, homodimer. It depends on [2Fe-2S] cluster as a cofactor. Mg(2+) serves as cofactor.

It catalyses the reaction (2R)-2,3-dihydroxy-3-methylbutanoate = 3-methyl-2-oxobutanoate + H2O. The catalysed reaction is (2R,3R)-2,3-dihydroxy-3-methylpentanoate = (S)-3-methyl-2-oxopentanoate + H2O. It functions in the pathway amino-acid biosynthesis; L-isoleucine biosynthesis; L-isoleucine from 2-oxobutanoate: step 3/4. The protein operates within amino-acid biosynthesis; L-valine biosynthesis; L-valine from pyruvate: step 3/4. In terms of biological role, functions in the biosynthesis of branched-chain amino acids. Catalyzes the dehydration of (2R,3R)-2,3-dihydroxy-3-methylpentanoate (2,3-dihydroxy-3-methylvalerate) into 2-oxo-3-methylpentanoate (2-oxo-3-methylvalerate) and of (2R)-2,3-dihydroxy-3-methylbutanoate (2,3-dihydroxyisovalerate) into 2-oxo-3-methylbutanoate (2-oxoisovalerate), the penultimate precursor to L-isoleucine and L-valine, respectively. In Photobacterium profundum (strain SS9), this protein is Dihydroxy-acid dehydratase.